The primary structure comprises 741 residues: Ethylene receptor 2 (741 aa).

Transmembrane regions (helical) follow at residues 23–43 (ISDF…IYFV), 53–73 (WVLV…LINL), and 92–112 (IMTA…IPDL). Positions 65 and 69 each coordinate Cu cation. Positions 158–307 (DRHTILKTTL…VVADQVAVAL (150 aa)) constitute a GAF domain. A Histidine kinase domain is found at 350-589 (VMNHEMRTPM…TFVVKLGIPE (240 aa)). Histidine 353 carries the post-translational modification Phosphohistidine; by autocatalysis. Residues 615–732 (KVLLLDDNGV…KMRNVLSNLL (118 aa)) form the Response regulatory domain. The residue at position 663 (aspartate 663) is a 4-aspartylphosphate.

This sequence belongs to the ethylene receptor family. Homodimer; disulfide-linked. It depends on Cu cation as a cofactor. Post-translationally, activation probably requires a transfer of a phosphate group between a His in the transmitter domain and an Asp of the receiver domain.

Its subcellular location is the endoplasmic reticulum membrane. It carries out the reaction ATP + protein L-histidine = ADP + protein N-phospho-L-histidine.. Its function is as follows. May act early in the ethylene signal transduction pathway, possibly as an ethylene receptor, or as a regulator of the pathway. The protein is Ethylene receptor 2 (ETR2) of Pelargonium hortorum (Common geranium).